The chain runs to 173 residues: Crossover junction endodeoxyribonuclease RuvC (173 aa).

Active-site residues include Asp-8, Glu-67, and Asp-139. Residues Asp-8, Glu-67, and Asp-139 each coordinate Mg(2+).

This sequence belongs to the RuvC family. As to quaternary structure, homodimer which binds Holliday junction (HJ) DNA. The HJ becomes 2-fold symmetrical on binding to RuvC with unstacked arms; it has a different conformation from HJ DNA in complex with RuvA. In the full resolvosome a probable DNA-RuvA(4)-RuvB(12)-RuvC(2) complex forms which resolves the HJ. Mg(2+) serves as cofactor.

Its subcellular location is the cytoplasm. It carries out the reaction Endonucleolytic cleavage at a junction such as a reciprocal single-stranded crossover between two homologous DNA duplexes (Holliday junction).. Functionally, the RuvA-RuvB-RuvC complex processes Holliday junction (HJ) DNA during genetic recombination and DNA repair. Endonuclease that resolves HJ intermediates. Cleaves cruciform DNA by making single-stranded nicks across the HJ at symmetrical positions within the homologous arms, yielding a 5'-phosphate and a 3'-hydroxyl group; requires a central core of homology in the junction. The consensus cleavage sequence is 5'-(A/T)TT(C/G)-3'. Cleavage occurs on the 3'-side of the TT dinucleotide at the point of strand exchange. HJ branch migration catalyzed by RuvA-RuvB allows RuvC to scan DNA until it finds its consensus sequence, where it cleaves and resolves the cruciform DNA. The polypeptide is Crossover junction endodeoxyribonuclease RuvC (Salmonella dublin (strain CT_02021853)).